A 607-amino-acid polypeptide reads, in one-letter code: Acyl-coenzyme A thioesterase 11 (607 aa).

A mitochondrion-targeting transit peptide spans 1–13 (MIQNVGNHLRRGL). Phosphoserine is present on residues Ser-15 and Ser-25. The region spanning 43 to 155 (NPTEVQMSQL…LATFVARREI (113 aa)) is the HotDog ACOT-type 1 domain. Residues 91 to 93 (TAS), 120 to 122 (NSS), Arg-181, and 271 to 273 (HFR) each bind CoA. A HotDog ACOT-type 2 domain is found at 216–329 (EKTRVESVEL…FMTFVVLDAD (114 aa)). Positions 375 to 585 (LSVPWDPSNQ…GWNGKLAGGH (211 aa)) constitute an START domain.

In terms of tissue distribution, isoform 1 is predominantly expressed in skeletal muscle, liver, testis, stomach, spleen, lung and brain. Isoform 2 is predominantly expressed in kidney, uterus, hibernoma and white adipose tissue.

Its subcellular location is the mitochondrion matrix. It is found in the cytoplasm. The catalysed reaction is hexadecanoyl-CoA + H2O = hexadecanoate + CoA + H(+). It carries out the reaction tetradecanoyl-CoA + H2O = tetradecanoate + CoA + H(+). The enzyme catalyses dodecanoyl-CoA + H2O = dodecanoate + CoA + H(+). It catalyses the reaction butanoyl-CoA + H2O = butanoate + CoA + H(+). It participates in lipid metabolism; fatty acid metabolism. Its function is as follows. Has an acyl-CoA thioesterase activity with a preference for the long chain fatty acyl-CoA thioesters hexadecanoyl-CoA/palmitoyl-CoA and tetradecanoyl-CoA/myristoyl-CoA which are the main substrates in the mitochondrial beta-oxidation pathway. The polypeptide is Acyl-coenzyme A thioesterase 11 (ACOT11) (Homo sapiens (Human)).